Consider the following 4910-residue polypeptide: Midasin (4910 aa).

AAA-ATPase protomer regions lie at residues 305 to 528 (IQNS…DILF) and 636 to 975 (MEQI…TDII). Residues 315–322 (GKAGSGKT) and 653–660 (GETGTGKT) each bind ATP. The tract at residues 695 to 803 (VNSKTVAVPI…KKFEAQSSSI (109 aa)) is interaction with RIX1. T1026 is modified (phosphothreonine). AAA-ATPase protomer stretches follow at residues 1054 to 1280 (HYII…WALR), 1345 to 1624 (KGMR…VEFI), 1732 to 1985 (RVVR…QLLI), and 2036 to 2286 (VYES…DELH). ATP is bound by residues 1083-1090 (GPTSSGKT), 1368-1375 (GETGCGKT), 1747-1754 (GSPGVGKT), and 2054-2061 (GPSNSGKT). A linker region spans residues 2372–4075 (EVGKWANNVL…DGEGAQNNNK (1704 aa)). S2971 is modified (phosphoserine). Disordered stretches follow at residues 4045–4547 (SPQP…EKMD), 4555–4574 (SDIDAHDANNDVDSKKSGFI), and 4579–4600 (SEEDFENELSNEHFSADQEDDS). The segment covering 4078–4088 (EQDEDLTEDAQ) has biased composition (acidic residues). Over residues 4089-4098 (NENKEQQDKD) the composition is skewed to basic and acidic residues. Residues 4099-4154 (ERDDENEDDAVEMEGDMAGELEDLSNGEENDDEDTDSEEEELDEEIDDLNEDDPNA) are compositionally biased toward acidic residues. Positions 4155–4174 (IDDKMWDDKASDNSKEKDTD) are enriched in basic and acidic residues. 3 stretches are compositionally biased toward acidic residues: residues 4202-4244 (GDED…EDLE), 4251-4274 (ETLDLPEDMNLDSEHEESDEDVDM), and 4288-4358 (GNED…EEEL). The residue at position 4353 (S4353) is a Phosphoserine. Basic and acidic residues predominate over residues 4359–4372 (KQDAAMEENKEKGG). T4388 carries the phosphothreonine modification. Composition is skewed to basic and acidic residues over residues 4435–4447 (DVTKNNEESREEA) and 4481–4495 (LEKNNERPDEFEHVE). Over residues 4498-4516 (NTETDTQALGSATQDQLQT) the composition is skewed to polar residues. Acidic residues predominate over residues 4517–4531 (IDEDMAIDDDREEQE). S4555 carries the post-translational modification Phosphoserine. The span at 4557 to 4570 (IDAHDANNDVDSKK) shows a compositional bias: basic and acidic residues. One can recognise a VWFA domain in the interval 4704–4899 (QIMIALDDSK…SELPEMLSLI (196 aa)).

It belongs to the midasin family. In terms of assembly, associates with pre-60S ribosomes in the nucleoplasm. Interacts (via its hexameric AAA ATPase ring) with the RIX1 complex (via RIX1); this interaction is crucial for recruitment of MDN1 to the pre-ribosomal particle. Interacts (via VWFA/MIDAS domain) with YTM1 (via UBL domain). Interacts (via VWFA/MIDAS domain) with RSA4 (via UBL domain).

It localises to the nucleus. It is found in the nucleolus. The protein resides in the nucleoplasm. Its function is as follows. Nuclear chaperone required for maturation and nuclear export of pre-60S ribosome subunits. Functions at successive maturation steps to remove ribosomal factors at critical transition points, first driving the exit of early pre-60S particles from the nucleolus and then driving late pre-60S particles from the nucleus. At an early stage in 60S maturation, mediates the dissociation of the NOP7 complex (YTM1-ERB1-NOP7) from early pre-60S particles, rendering them competent for export from the nucleolus to the nucleoplasm. Subsequently recruited to the nucleoplasmic particles through interaction with the RIX1 complex. This binding is only possible if the 5S RNP at the central protuberance has undergone the rotation to complete its maturation. After remodeling, removes the ribosome biogenesis factor RSA4 in an ATP hydrolysis-driven step from pre-60S ribosomal subunits, rendering them competent for export from the nucleoplasm to the cytoplasm. Activates the GTPase activity of NOG2, which disengages from the pre-60S particle upon GTP hydrolysis, thus freeing its binding site for the nuclear export factor NMD3. This chain is Midasin (MDN1), found in Saccharomyces cerevisiae (strain ATCC 204508 / S288c) (Baker's yeast).